The primary structure comprises 124 residues: Small ribosomal subunit protein bS6 (124 aa).

The protein belongs to the bacterial ribosomal protein bS6 family.

Functionally, binds together with bS18 to 16S ribosomal RNA. This chain is Small ribosomal subunit protein bS6, found in Chromobacterium violaceum (strain ATCC 12472 / DSM 30191 / JCM 1249 / CCUG 213 / NBRC 12614 / NCIMB 9131 / NCTC 9757 / MK).